Here is a 379-residue protein sequence, read N- to C-terminus: Cytochrome b (379 aa).

4 helical membrane passes run 34 to 54, 78 to 99, 114 to 134, and 179 to 199; these read LGSL…FLTM, WLIR…YLHV, WMTG…GYVL, and FYTF…IHLF. 2 residues coordinate heme b: histidine 84 and histidine 98. Heme b is bound by residues histidine 183 and histidine 197. Histidine 202 is an a ubiquinone binding site. 4 consecutive transmembrane segments (helical) span residues 227 to 247, 289 to 309, 321 to 341, and 348 to 368; these read YKDM…CLID, LGGV…PFYN, MNQI…WIGK, and YIMT…FNVH.

This sequence belongs to the cytochrome b family. As to quaternary structure, the main subunits of complex b-c1 are: cytochrome b, cytochrome c1 and the Rieske protein. The cofactor is heme b.

Its subcellular location is the mitochondrion inner membrane. Component of the ubiquinol-cytochrome c reductase complex (complex III or cytochrome b-c1 complex) that is part of the mitochondrial respiratory chain. The b-c1 complex mediates electron transfer from ubiquinol to cytochrome c. Contributes to the generation of a proton gradient across the mitochondrial membrane that is then used for ATP synthesis. The protein is Cytochrome b (MT-CYB) of Locusta migratoria (Migratory locust).